Here is a 502-residue protein sequence, read N- to C-terminus: Aspartyl/glutamyl-tRNA(Asn/Gln) amidotransferase subunit B (502 aa).

Residues 272–293 (TRHWHEDTRSTTSGRPKSDADD) are disordered.

It belongs to the GatB/GatE family. GatB subfamily. Heterotrimer of A, B and C subunits.

It catalyses the reaction L-glutamyl-tRNA(Gln) + L-glutamine + ATP + H2O = L-glutaminyl-tRNA(Gln) + L-glutamate + ADP + phosphate + H(+). It carries out the reaction L-aspartyl-tRNA(Asn) + L-glutamine + ATP + H2O = L-asparaginyl-tRNA(Asn) + L-glutamate + ADP + phosphate + 2 H(+). Functionally, allows the formation of correctly charged Asn-tRNA(Asn) or Gln-tRNA(Gln) through the transamidation of misacylated Asp-tRNA(Asn) or Glu-tRNA(Gln) in organisms which lack either or both of asparaginyl-tRNA or glutaminyl-tRNA synthetases. The reaction takes place in the presence of glutamine and ATP through an activated phospho-Asp-tRNA(Asn) or phospho-Glu-tRNA(Gln). The sequence is that of Aspartyl/glutamyl-tRNA(Asn/Gln) amidotransferase subunit B from Paenarthrobacter aurescens (strain TC1).